Consider the following 247-residue polypeptide: tRNA uridine(34) hydroxylase (247 aa).

The Rhodanese domain occupies 124–218; sequence TKQNVIVIDT…YLEDTQNKNN (95 aa). Catalysis depends on C178, which acts as the Cysteine persulfide intermediate.

This sequence belongs to the TrhO family.

The enzyme catalyses uridine(34) in tRNA + AH2 + O2 = 5-hydroxyuridine(34) in tRNA + A + H2O. Functionally, catalyzes oxygen-dependent 5-hydroxyuridine (ho5U) modification at position 34 in tRNAs. The chain is tRNA uridine(34) hydroxylase from Rickettsia akari (strain Hartford).